The chain runs to 487 residues: FAD-dependent oxidoreductase domain-containing protein 1 (487 aa).

Residues 62-82 form a helical membrane-spanning segment; it reads EQADVVIIGGGILGLSVAFWL.

As to quaternary structure, associates with components of the mitochondrial respiratory chain complex I. Requires FAD as cofactor.

Its subcellular location is the mitochondrion inner membrane. Functionally, required for the assembly of the mitochondrial membrane respiratory chain NADH dehydrogenase (Complex I). Involved in mid-late stages of complex I assembly. This Mus musculus (Mouse) protein is FAD-dependent oxidoreductase domain-containing protein 1 (Foxred1).